Reading from the N-terminus, the 408-residue chain is Serine/threonine transporter SstT (408 aa).

A run of 9 helical transmembrane segments spans residues 14–34 (GNLILQICIGIVLGILIGIFS), 43–63 (IFGALFTGALKAIAPILVFIL), 83–103 (IIFLYIFGTFLASLSAVSISF), 143–163 (ALSSGNYLSILAWAIGGGFAL), 181–201 (VLKIVKFIVKLAPFGIFGLVA), 219–239 (LIILVLTMFFVAFVINALIVF), 247–269 (YPLIFICLKHSAVFAFFTRSSAA), 290–310 (ISIPLGATINMAGAAVTIAIL), and 332–352 (VLAAFAACGASGVAGGSLLLI).

The protein belongs to the dicarboxylate/amino acid:cation symporter (DAACS) (TC 2.A.23) family.

Its subcellular location is the cell inner membrane. It catalyses the reaction L-serine(in) + Na(+)(in) = L-serine(out) + Na(+)(out). It carries out the reaction L-threonine(in) + Na(+)(in) = L-threonine(out) + Na(+)(out). Its function is as follows. Involved in the import of serine and threonine into the cell, with the concomitant import of sodium (symport system). The chain is Serine/threonine transporter SstT from Campylobacter lari (strain RM2100 / D67 / ATCC BAA-1060).